A 278-amino-acid chain; its full sequence is Tryptophan synthase alpha chain (278 aa).

Residues glutamate 50 and aspartate 61 each act as proton acceptor in the active site.

It belongs to the TrpA family. As to quaternary structure, tetramer of two alpha and two beta chains.

It catalyses the reaction (1S,2R)-1-C-(indol-3-yl)glycerol 3-phosphate + L-serine = D-glyceraldehyde 3-phosphate + L-tryptophan + H2O. The protein operates within amino-acid biosynthesis; L-tryptophan biosynthesis; L-tryptophan from chorismate: step 5/5. The alpha subunit is responsible for the aldol cleavage of indoleglycerol phosphate to indole and glyceraldehyde 3-phosphate. The protein is Tryptophan synthase alpha chain of Nitrobacter winogradskyi (strain ATCC 25391 / DSM 10237 / CIP 104748 / NCIMB 11846 / Nb-255).